Reading from the N-terminus, the 499-residue chain is Glutelin type-B 1 (499 aa).

The signal sequence occupies residues 1-24; it reads MASSVFSRFSIYFCVLLLCHGSMA. Cystine bridges form between C45/C78 and C121/C309. Cupin type-1 domains are found at residues 50-247 and 315-464; these read LQAF…VAAK and VNIE…EQAR. Residues 467–499 form a disordered region; the sequence is KNNRGEEHGAFTPRFQQQYYPGLSNESESETSE.

This sequence belongs to the 11S seed storage protein (globulins) family. In terms of assembly, hexamer; each subunit is composed of an acidic and a basic chain derived from a single precursor and linked by a disulfide bond.

In terms of biological role, seed storage protein. The protein is Glutelin type-B 1 (GluB1-A) of Oryza sativa subsp. japonica (Rice).